The sequence spans 52 residues: Ovomucoid (52 aa).

Positions 2–52 constitute a Kazal-like domain; that stretch reads VDCSEYPKPACPKDYRPVCGSDNKTYGNKCNFCNAVVESNGTLTLNRFGKC. 3 disulfides stabilise this stretch: cysteine 4-cysteine 34, cysteine 12-cysteine 31, and cysteine 20-cysteine 52. The N-linked (GlcNAc...) asparagine glycan is linked to asparagine 41.

The protein localises to the secreted. The sequence is that of Ovomucoid from Coturnix delegorguei (Harlequin quail).